The sequence spans 283 residues: Thymidylate synthase (283 aa).

DUMP is bound by residues R31 and R145–R146. C165 (nucleophile) is an active-site residue. DUMP is bound by residues R185–D188, N196, and H226–Y228. D188 contacts (6R)-5,10-methylene-5,6,7,8-tetrahydrofolate. S282 contributes to the (6R)-5,10-methylene-5,6,7,8-tetrahydrofolate binding site.

This sequence belongs to the thymidylate synthase family. Bacterial-type ThyA subfamily. As to quaternary structure, homodimer.

It is found in the cytoplasm. It catalyses the reaction dUMP + (6R)-5,10-methylene-5,6,7,8-tetrahydrofolate = 7,8-dihydrofolate + dTMP. The protein operates within pyrimidine metabolism; dTTP biosynthesis. Functionally, catalyzes the reductive methylation of 2'-deoxyuridine-5'-monophosphate (dUMP) to 2'-deoxythymidine-5'-monophosphate (dTMP) while utilizing 5,10-methylenetetrahydrofolate (mTHF) as the methyl donor and reductant in the reaction, yielding dihydrofolate (DHF) as a by-product. This enzymatic reaction provides an intracellular de novo source of dTMP, an essential precursor for DNA biosynthesis. This Symbiobacterium thermophilum (strain DSM 24528 / JCM 14929 / IAM 14863 / T) protein is Thymidylate synthase.